We begin with the raw amino-acid sequence, 1491 residues long: MKHLKGLLLPALLALASSAAAKDPLVETTPFKNELVNLMYFDDSGVALVQELDNGKIFRSHDAGKGWKEIKDVQGLGIIKSPYDNKVALILGEKKHWITYDQGENWDSFETKLPPSPQGPVGWHAQDNKKILLNEIENCFTAPCLGKTYYTTDGFKTDPKTLVDDRRMCQWAKASERFLQGVDKHDDRILCITRGKYSDRSKDFRLLMSDNFFKETEEPVMSSGRTVQGMANMAAVKGYIVAAAKAEHSSELALYVTQDTDSWHHARFGDHKIEEDAYTILESTNYSIQVDVMTSKYVTMGNLYTSNSNGTYFTKNVEHTNRNDAGYVDFEKIANIQGVVLVNTVDNYKEVEKSGQSKKLKSRISFDDGRSFEKLTVKGKDGELHLHSVTNLHNSGRVFSSPAPGIVMGVGNTGDYLGKYTDGDLYVSDDAGLTWELALEEAHKYEFGDQGSVLVAVFDEGDTDEIRYSFKHGRKDTWQKIKLDYKIRARELTTLPDSTSLKFMIYGSRKKDGGGREHVIVHLDFSDMLKKCGDSDFDDEWSVRKDADGDPSCVMGHKQLFRRRKWDAECSVGELFKDPVPKFKPCDCDKFRDYECDFNFTPTGEGKDKKCEPSESFSLPKGACEGDAKSYKGSSGWRKIPGNQCKGETERDKQVERECKDAERPRPKTDKITSEITKFKGSNFMEQYYLERNTQSDGTDNDRGKDETVVMLTDERTAYITHDHGKKWKKAVDDEIVRIYPHQYENNNVYFLTASKKVYYSKDRGLHDSINSFEAPVMPNTEMLPIMQFHPKQKDWIIWLGGKNCEKLGNKDCHTVAYVSQKNGEDSSWESLVPYVKKCAFVWREAGRSVKEEQVFCEQHTNEEKNAPLELISSDDWFKKKDVKFKSVVEFATMSEFIIVATKAEDNTLHLDASLDAHTFAEAKFPPKFFDIHQTAYTVLDSSTHAVFLHVTVNPQRDQEYGSIIKSNSNGTSYVMSLAAVNRNTEGYVDFEKMQGLEGVAVANVIVNVDEVNKGAKKKKQSRITHNDGADWEPLQAPEKDSDDKPYDCDIADKKKCGLHIHGYTERADPREMYSSPTAVGLMLAVGNVGPELTTFGEANTFMTTDAGITWKEVKKGTYAWEFGDQGSVIVIVRRGEDTDHVYYSVDSGAKWDLYQFADHKMRVDAITTVPSDTSLNFLLWGKDSRELFAVNLDFSGLPEFQKECKLDENDPTKGDYDLWSPQHPLQQDEPECLFGHVAQYHRKKRDVKCRNGQRIDQMHDIARNCSCTRRDFECAYNYERDSSGDCVLVPGLSLPDPAKVCSNKNVKEYYSNTRFRKIPLSTCQGGTEYDKTGDVHPCPGFEEDFKKNHGVGGFTLFLAIVLPFAAAAGVGYWVWRNWDGKFGRIRLGEPGGGSAFDSDAPWVRWPIAAVSGLVAVGAALPLVVGSVWRWVVGRMGGRGGGGGGYSGLGGSGFGRAYTSRSSFARGRGEYSVVDPDEGELLGDEESDEDV.

The N-terminal stretch at 1–21 (MKHLKGLLLPALLALASSAAA) is a signal peptide. Residues 22-1354 (KDPLVETTPF…DFKKNHGVGG (1333 aa)) are Lumenal-facing. The BNR 1 repeat unit spans residues 97 to 107 (WITYDQGENWD). N-linked (GlcNAc...) asparagine glycosylation is found at Asn-285 and Asn-309. 2 BNR repeats span residues 364–374 (ISFDDGRSFEK) and 426–436 (YVSDDAGLTWE). A disordered region spans residues 640 to 667 (IPGNQCKGETERDKQVERECKDAERPRP). Residues 647–667 (GETERDKQVERECKDAERPRP) show a composition bias toward basic and acidic residues. One copy of the BNR 4 repeat lies at 719-730 (YITHDHGKKWKK). Asn-970 carries an N-linked (GlcNAc...) asparagine glycan. A disordered region spans residues 1018 to 1047 (KKKQSRITHNDGADWEPLQAPEKDSDDKPY). Residues 1038-1047 (PEKDSDDKPY) show a composition bias toward basic and acidic residues. 2 BNR repeats span residues 1102–1112 (FMTTDAGITWK) and 1143–1153 (YYSVDSGAKWD). Asn-1265 carries N-linked (GlcNAc...) asparagine glycosylation. Residues 1355-1375 (FTLFLAIVLPFAAAAGVGYWV) traverse the membrane as a helical segment. Residues 1376–1405 (WRNWDGKFGRIRLGEPGGGSAFDSDAPWVR) lie on the Cytoplasmic side of the membrane. A helical membrane pass occupies residues 1406–1426 (WPIAAVSGLVAVGAALPLVVG). The Lumenal segment spans residues 1427-1491 (SVWRWVVGRM…LGDEESDEDV (65 aa)). Positions 1464–1491 (FARGRGEYSVVDPDEGELLGDEESDEDV) are disordered. Residues 1475–1491 (DPDEGELLGDEESDEDV) show a composition bias toward acidic residues.

Belongs to the VPS10-related sortilin family.

The protein resides in the golgi apparatus. It localises to the trans-Golgi network membrane. It is found in the prevacuolar compartment membrane. Functionally, functions as a sorting receptor in the Golgi compartment required for the intracellular sorting and delivery of soluble vacuolar proteins, like carboxypeptidase Y (CPY) and proteinase A. Executes multiple rounds of sorting by cycling between the late Golgi and a prevacuolar endosome-like compartment. In Pyrenophora tritici-repentis (strain Pt-1C-BFP) (Wheat tan spot fungus), this protein is Vacuolar protein sorting/targeting protein 10 (vps10).